Reading from the N-terminus, the 248-residue chain is Flavodoxin/ferredoxin--NADP reductase (248 aa).

Positions 2 to 101 constitute an FAD-binding FR-type domain; that stretch reads ADWVTGKVTK…SEAAGFFVLD (100 aa). Asp-17 is an NADP(+) binding site. Residues 50–53, Tyr-66, 74–76, and Thr-116 each bind FAD; these read RAYS and KLS. NADP(+) is bound by residues 143–144, 173–174, Arg-184, 214–216, and Asp-220; these read AR, SR, and NPQ. Position 247–248 (247–248) interacts with FAD; sequence YW.

This sequence belongs to the ferredoxin--NADP reductase type 1 family. Monomer. FAD is required as a cofactor.

It localises to the cytoplasm. The catalysed reaction is 2 reduced [2Fe-2S]-[ferredoxin] + NADP(+) + H(+) = 2 oxidized [2Fe-2S]-[ferredoxin] + NADPH. It catalyses the reaction reduced [flavodoxin] + NADP(+) = oxidized [flavodoxin] + NADPH + 2 H(+). Transports electrons between flavodoxin or ferredoxin and NADPH. Reduces flavodoxin 1, flavodoxin 2 and ferredoxin, ferredoxin being the kinetically and thermodynamically preferred partner. Required for the activation of several enzymes such as pyruvate formate-lyase, anaerobic ribonucleotide reductase and cobalamin-dependent methionine synthase. The sequence is that of Flavodoxin/ferredoxin--NADP reductase from Escherichia coli (strain K12).